Consider the following 519-residue polypeptide: NADH-quinone oxidoreductase subunit N (519 aa).

The next 14 membrane-spanning stretches (helical) occupy residues 22 to 42, 53 to 73, 87 to 107, 141 to 161, 163 to 183, 198 to 218, 242 to 262, 287 to 307, 310 to 330, 336 to 356, 363 to 383, 406 to 426, 442 to 461, and 483 to 503; these read LLPM…EAFV, VLAL…TGLP, PTLF…LLIA, TEVF…PAAN, LITA…LAGM, YFLL…LVYG, IIVG…GVPF, VAAF…LAWD, PVIW…GITQ, LLAY…AATT, VLFY…IVIL, LVAG…PTSG, AGPL…YYYL, and GALA…LGIV.

The protein belongs to the complex I subunit 2 family. In terms of assembly, NDH-1 is composed of 14 different subunits. Subunits NuoA, H, J, K, L, M, N constitute the membrane sector of the complex.

The protein localises to the cell membrane. The enzyme catalyses a quinone + NADH + 5 H(+)(in) = a quinol + NAD(+) + 4 H(+)(out). Functionally, NDH-1 shuttles electrons from NADH, via FMN and iron-sulfur (Fe-S) centers, to quinones in the respiratory chain. The immediate electron acceptor for the enzyme in this species is believed to be a menaquinone. Couples the redox reaction to proton translocation (for every two electrons transferred, four hydrogen ions are translocated across the cytoplasmic membrane), and thus conserves the redox energy in a proton gradient. This is NADH-quinone oxidoreductase subunit N from Acidothermus cellulolyticus (strain ATCC 43068 / DSM 8971 / 11B).